We begin with the raw amino-acid sequence, 361 residues long: Phosphoserine aminotransferase (361 aa).

Arg-43 serves as a coordination point for L-glutamate. Pyridoxal 5'-phosphate-binding positions include 77-78, Trp-103, Thr-153, Asp-173, and Gln-196; that span reads AS. N6-(pyridoxal phosphate)lysine is present on Lys-197. 238-239 serves as a coordination point for pyridoxal 5'-phosphate; that stretch reads NT.

This sequence belongs to the class-V pyridoxal-phosphate-dependent aminotransferase family. SerC subfamily. In terms of assembly, homodimer. Pyridoxal 5'-phosphate is required as a cofactor.

The protein resides in the cytoplasm. It catalyses the reaction O-phospho-L-serine + 2-oxoglutarate = 3-phosphooxypyruvate + L-glutamate. It carries out the reaction 4-(phosphooxy)-L-threonine + 2-oxoglutarate = (R)-3-hydroxy-2-oxo-4-phosphooxybutanoate + L-glutamate. It functions in the pathway amino-acid biosynthesis; L-serine biosynthesis; L-serine from 3-phospho-D-glycerate: step 2/3. It participates in cofactor biosynthesis; pyridoxine 5'-phosphate biosynthesis; pyridoxine 5'-phosphate from D-erythrose 4-phosphate: step 3/5. Catalyzes the reversible conversion of 3-phosphohydroxypyruvate to phosphoserine and of 3-hydroxy-2-oxo-4-phosphonooxybutanoate to phosphohydroxythreonine. In Pseudomonas syringae pv. syringae (strain B728a), this protein is Phosphoserine aminotransferase.